The chain runs to 286 residues: Master replication protein (286 aa).

One can recognise a CRESS-DNA virus Rep endonuclease domain in the interval 2 to 96 (ARQVICWCFT…VEGPWEFGEF (95 aa)). Positions 9–12 (CFTL) match the RCR-1 motif. Glu33 and His41 together coordinate a divalent metal cation. Positions 41-43 (HYQ) match the RCR-2 motif. The short motif at 50–70 (KRTSLVQMKKLLPGAHLEKRR) is the Nuclear localization signal element. The active-site For DNA cleavage activity is the Tyr79. The RCR-3 motif lies at 79–82 (YAMK). Position 84 (Asp84) interacts with a divalent metal cation. The short motif at 96-102 (FKEVLED) is the Nuclear localization signal element. Residue 180–188 (GPQGGEGKT) coordinates ATP.

Belongs to the nanoviridea/circoviridae replication-associated protein family. In terms of assembly, homooligomer (Potential). Rep binds to repeated DNA motifs (iterons). The cofactor is Mg(2+). Mn(2+) serves as cofactor.

It localises to the host nucleus. It catalyses the reaction ATP + H2O = ADP + phosphate + H(+). Essential for the replication of all genomic viral ssDNA (trans-replication). The closed circular ssDNA genome is first converted to a superhelical dsDNA. Rep binds a specific hairpin at the genome origin of replication. Introduces an endonucleolytic nick within the conserved sequence 5'-A[GT]TATTAC-3' in the intergenic region of the genome, thereby initiating the rolling circle replication (RCR). Following cleavage, binds covalently to the 5'-phosphate of DNA as a tyrosyl ester. The cleavage gives rise to a free 3'-OH that serves as a primer for the cellular DNA polymerase. The polymerase synthesizes the (+) strand DNA by rolling circle mechanism. After one round of replication, a Rep-catalyzed nucleotidyl transfer reaction releases a circular single-stranded virus genome, thereby terminating the replication. Displays origin-specific DNA cleavage, nucleotidyl transferase, ATPase and helicase activities. This is Master replication protein (DNA-R) from Subterranean clover stunt virus (strain F) (SCSV).